A 443-amino-acid chain; its full sequence is Protein UIP5 (443 aa).

An N-terminal signal peptide occupies residues 1–27 (MSRDVRAEKLAISLLILSLFLIFQLVA). Residues 28–398 (EIYLNNGDQY…LFKVVLTIWH (371 aa)) are Perinuclear space-facing. The helical transmembrane segment at 399 to 420 (YSEILLLIMGIYLFSACIRVFQ) threads the bilayer. The Cytoplasmic portion of the chain corresponds to 421–443 (RRFKKIRSRRKRAGSHSVGLLPM).

The protein resides in the nucleus membrane. The polypeptide is Protein UIP5 (UIP5) (Saccharomyces cerevisiae (strain ATCC 204508 / S288c) (Baker's yeast)).